Consider the following 512-residue polypeptide: Cytochrome P450 monooxygenase cheE (512 aa).

Residues 5-27 (YFAAESSWSPYVILVLALAAMVA) traverse the membrane as a helical segment. Residues Asn-53, Asn-124, and Asn-168 are each glycosylated (N-linked (GlcNAc...) asparagine). Cys-455 contributes to the heme binding site. N-linked (GlcNAc...) asparagine glycosylation is found at Asn-499 and Asn-508.

Belongs to the cytochrome P450 family. Heme is required as a cofactor.

The protein localises to the membrane. It participates in secondary metabolite biosynthesis. In terms of biological role, cytochrome P450 monooxygenase; part of the gene cluster that mediates the biosynthesis of chaetoglobosin A which has a unique inhibitory activity against actin polymerization in mammalian cells. Chaetoglobosin A and its intermediates are involved in the morphological differentiation of C.globosum. The first step of the pathway is the synthesis of prochaetoglobosin I via condensation of one acetyl-CoA, 8 malonyl-CoA, and a L-tryptophan molecule by the PKS-NRPS hybrid synthetase cheA, followed by reduction of backbone double bond to install desired geometry by the enoyl reductase cheB. Further multiple oxidation steps performed by the cytochrome P450 monooxygenases cheE and cheG, as well as by the FAD-linked oxidoreductase cheF, lead to the formation of chaetoglobosin A. Depending on the order of action of these reductases, distinct intermediates can be identified. Within the pathway, the cytochrome P450 monooxygenase cheE catalyzes a stereospecific epoxidation on prochaetoglobosin I, cytoglobosin D, and chaetoglobosin J intermediates. The FAD-linked oxidoreductase cheF performs dehydrogenation of the C-20 hydroxyl groups in the 20-dihyrochaetoglobosin A and cytoglobosin D intermediates. Finally, the cytochrome P450 monooxygenase cheG can catalyze the stereospecific dihydroxylation of prochaetoglobosin I and prochaetoglobosin IV at C-19 and C-20, respectively. The Diels-Alderase cheD may play a role in the post-PKS-NRPS biosynthetic steps catalyzing Diels-Alder cyclization. The sequence is that of Cytochrome P450 monooxygenase cheE from Chaetomium globosum (strain ATCC 6205 / CBS 148.51 / DSM 1962 / NBRC 6347 / NRRL 1970) (Soil fungus).